The primary structure comprises 948 residues: Isoleucine--tRNA ligase (948 aa).

The 'HIGH' region signature appears at 58–68 (PYANGDIHIGH). Glutamate 566 is a binding site for L-isoleucyl-5'-AMP. Residues 607-611 (KMSKS) carry the 'KMSKS' region motif. Lysine 610 provides a ligand contact to ATP. 4 residues coordinate Zn(2+): cysteine 911, cysteine 914, cysteine 931, and cysteine 934.

The protein belongs to the class-I aminoacyl-tRNA synthetase family. IleS type 1 subfamily. As to quaternary structure, monomer. Requires Zn(2+) as cofactor.

The protein resides in the cytoplasm. It catalyses the reaction tRNA(Ile) + L-isoleucine + ATP = L-isoleucyl-tRNA(Ile) + AMP + diphosphate. Catalyzes the attachment of isoleucine to tRNA(Ile). As IleRS can inadvertently accommodate and process structurally similar amino acids such as valine, to avoid such errors it has two additional distinct tRNA(Ile)-dependent editing activities. One activity is designated as 'pretransfer' editing and involves the hydrolysis of activated Val-AMP. The other activity is designated 'posttransfer' editing and involves deacylation of mischarged Val-tRNA(Ile). This is Isoleucine--tRNA ligase from Vibrio vulnificus (strain CMCP6).